Here is a 138-residue protein sequence, read N- to C-terminus: Large ribosomal subunit protein bL17 (138 aa).

Belongs to the bacterial ribosomal protein bL17 family. As to quaternary structure, part of the 50S ribosomal subunit. Contacts protein L32.

This Nitrobacter hamburgensis (strain DSM 10229 / NCIMB 13809 / X14) protein is Large ribosomal subunit protein bL17.